The sequence spans 415 residues: MADICPSRSEPTLSFTQGLILGQLSVVLLLAAFIKFFIFGDPPSPEVVASIRATDRRSRTLAHKKSILSLRETNALQLVQNPALNKKHVLRPGPPILTIGSILSKTYYKVDSHQPESLDWFNVLIAQTIAQFRSDAQHDDAILSSLSKALNGTARPDFLDEIKVTELSLGEDFPIFSNCRIIPVDEDGLSFGTGKAFDANMATREGARLQARMDVDLSDMITLAVETKLLLNYPKRLSAVLPVALAVSVVRFSGTLSISFIPSNPSNNEPAKMIFTFLDDYRLDFSIRSLLGSRSRLQDVPKIAQLVESRLHRWFDERCVEPRFQEIALPNMWPRKKNTRGGDETISDVERSMSKAKGVDIAKDVREEARKEIEAEAHGGADRVPDSLRYRHRPRADEEFPGAGSMPGSMPGSMP.

At 1–18 (MADICPSRSEPTLSFTQG) the chain is on the lumenal side. A helical transmembrane segment spans residues 19 to 39 (LILGQLSVVLLLAAFIKFFIF). The Cytoplasmic segment spans residues 40–415 (GDPPSPEVVA…MPGSMPGSMP (376 aa)). The SMP-LTD domain maps to 114-330 (QPESLDWFNV…EPRFQEIALP (217 aa)). The span at 373 to 389 (IEAEAHGGADRVPDSLR) shows a compositional bias: basic and acidic residues. Residues 373-415 (IEAEAHGGADRVPDSLRYRHRPRADEEFPGAGSMPGSMPGSMP) are disordered. Residues 404-415 (GSMPGSMPGSMP) show a composition bias toward low complexity.

It belongs to the MMM1 family. Homodimer. Component of the ER-mitochondria encounter structure (ERMES) or MDM complex, composed of mmm-1, mdm10, mdm12 and mdm34. A mmm-1 homodimer associates with one molecule of mdm12 on each side in a pairwise head-to-tail manner, and the SMP-LTD domains of mmm-1 and mdm12 generate a continuous hydrophobic tunnel for phospholipid trafficking.

The protein resides in the endoplasmic reticulum membrane. Its function is as follows. Component of the ERMES/MDM complex, which serves as a molecular tether to connect the endoplasmic reticulum (ER) and mitochondria. Components of this complex are involved in the control of mitochondrial shape and protein biogenesis, and function in nonvesicular lipid trafficking between the ER and mitochondria. The mdm12-mmm-1 subcomplex functions in the major beta-barrel assembly pathway that is responsible for biogenesis of all outer membrane beta-barrel proteins, and acts in a late step after the SAM complex. The mdm10-mdm12-mmm-1 subcomplex further acts in the TOM40-specific pathway after the action of the mdm12-mmm-1 complex. Essential for establishing and maintaining the structure of mitochondria and maintenance of mtDNA nucleoids. The chain is Maintenance of mitochondrial morphology protein 1 (mmm-1) from Neurospora crassa (strain ATCC 24698 / 74-OR23-1A / CBS 708.71 / DSM 1257 / FGSC 987).